The primary structure comprises 499 residues: Basic immunoglobulin-like variable motif-containing protein (499 aa).

Disordered regions lie at residues M1–L29, L153–A172, and G428–S465. Positions L153–Q162 are enriched in polar residues. The span at P444–S453 shows a compositional bias: basic and acidic residues.

The protein belongs to the BIVM family.

The protein localises to the cytoplasm. It localises to the nucleus. The protein is Basic immunoglobulin-like variable motif-containing protein (bivm) of Xenopus tropicalis (Western clawed frog).